The following is a 1622-amino-acid chain: WD repeat-containing protein 97 (1622 aa).

6 WD repeats span residues 187-233, 290-329, 331-370, 552-592, 594-633, and 687-726; these read SEQG…RRLV, LHKTTISDLAYCEEVEAMVTASRDSTVKVWEADWQIRMVF, GHTGPVTAMTVLPNTTLVLSASQDGTLRTWDLQAAAQVGE, ELRC…TVFQ, EAHSPGPVVAIASTWNSIVSSGGDLTVKMWRVFPYAEESL, and DPTDHITGLCCCPTLKLYACSSLDCTVRIWTAENRLLRLL. Disordered regions lie at residues 1090–1112 and 1453–1472; these read GEKPGEEGEEDKKEEEEEKEDEE and LHPAGPAQLPGEPPPLEETD. Positions 1094–1118 form a coiled coil; it reads GEEGEEDKKEEEEEKEDEELDWALA. The segment covering 1096–1112 has biased composition (acidic residues); sequence EGEEDKKEEEEEKEDEE.

The chain is WD repeat-containing protein 97 from Homo sapiens (Human).